A 347-amino-acid polypeptide reads, in one-letter code: Protein RecA (347 aa).

67–74 (GPESSGKT) is an ATP binding site.

It belongs to the RecA family.

It is found in the cytoplasm. Its function is as follows. Can catalyze the hydrolysis of ATP in the presence of single-stranded DNA, the ATP-dependent uptake of single-stranded DNA by duplex DNA, and the ATP-dependent hybridization of homologous single-stranded DNAs. It interacts with LexA causing its activation and leading to its autocatalytic cleavage. In Sulfurovum sp. (strain NBC37-1), this protein is Protein RecA.